Consider the following 179-residue polypeptide: Putative undecaprenyl-phosphate N-acetylgalactosaminyl 1-phosphate transferase (179 aa).

Residues 39-59 traverse the membrane as a helical segment; sequence IWFALIGLAIALPMIAVFSIL.

Belongs to the bacterial sugar transferase family.

It is found in the cell membrane. It catalyses the reaction di-trans,octa-cis-undecaprenyl phosphate + UDP-N-acetyl-alpha-D-galactosamine = N-acetyl-alpha-D-galactosaminyl-di-trans,octa-cis-undecaprenyl diphosphate + UMP. The protein operates within cell wall biogenesis; teichuronic acid biosynthesis. Might mediate the very first reaction in teichuronic synthesis, i.e. the formation of lipid-linked N-acetylglucosamine. This Bacillus subtilis (strain 168) protein is Putative undecaprenyl-phosphate N-acetylgalactosaminyl 1-phosphate transferase (tuaA).